The following is a 232-amino-acid chain: Orotate phosphoribosyltransferase (232 aa).

5-phospho-alpha-D-ribose 1-diphosphate-binding positions include Arg-107, Lys-108, Lys-111, and 133-141 (EDLTTDGGS). Orotate is bound at residue Thr-137.

It belongs to the purine/pyrimidine phosphoribosyltransferase family. PyrE subfamily. Homodimer. It depends on Mg(2+) as a cofactor.

It catalyses the reaction orotidine 5'-phosphate + diphosphate = orotate + 5-phospho-alpha-D-ribose 1-diphosphate. It functions in the pathway pyrimidine metabolism; UMP biosynthesis via de novo pathway; UMP from orotate: step 1/2. In terms of biological role, catalyzes the transfer of a ribosyl phosphate group from 5-phosphoribose 1-diphosphate to orotate, leading to the formation of orotidine monophosphate (OMP). This chain is Orotate phosphoribosyltransferase, found in Cereibacter sphaeroides (strain ATCC 17023 / DSM 158 / JCM 6121 / CCUG 31486 / LMG 2827 / NBRC 12203 / NCIMB 8253 / ATH 2.4.1.) (Rhodobacter sphaeroides).